Here is a 152-residue protein sequence, read N- to C-terminus: Large ribosomal subunit protein bL21 (152 aa).

The tract at residues valine 115 to glutamate 152 is disordered. Polar residues predominate over residues alanine 127–lysine 143.

The protein belongs to the bacterial ribosomal protein bL21 family. In terms of assembly, part of the 50S ribosomal subunit. Contacts protein L20.

This protein binds to 23S rRNA in the presence of protein L20. The sequence is that of Large ribosomal subunit protein bL21 from Prochlorococcus marinus (strain SARG / CCMP1375 / SS120).